Reading from the N-terminus, the 433-residue chain is Adenylosuccinate synthetase (433 aa).

GTP-binding positions include 13-19 (GDEGKGK) and 41-43 (GHT). Residue Asp14 is the Proton acceptor of the active site. Mg(2+) is bound by residues Asp14 and Gly41. Residues 14–17 (DEGK), 39–42 (NAGH), Thr130, Arg144, Gln225, Thr240, and Arg304 contribute to the IMP site. Residue His42 is the Proton donor of the active site. A substrate-binding site is contributed by 300–306 (STTGRKR). GTP-binding positions include Arg306, 332–334 (KLD), and 414–416 (STG).

Belongs to the adenylosuccinate synthetase family. Homodimer. Requires Mg(2+) as cofactor.

It is found in the cytoplasm. The enzyme catalyses IMP + L-aspartate + GTP = N(6)-(1,2-dicarboxyethyl)-AMP + GDP + phosphate + 2 H(+). It functions in the pathway purine metabolism; AMP biosynthesis via de novo pathway; AMP from IMP: step 1/2. In terms of biological role, plays an important role in the de novo pathway of purine nucleotide biosynthesis. Catalyzes the first committed step in the biosynthesis of AMP from IMP. This is Adenylosuccinate synthetase from Buchnera aphidicola subsp. Acyrthosiphon pisum (strain Tuc7).